A 735-amino-acid chain; its full sequence is Ion-translocating oxidoreductase complex subunit C (735 aa).

4Fe-4S ferredoxin-type domains lie at 368-397 (MGAPQEEKSCIRCSACADACPADLLPQQLY) and 407-436 (KATAHHIADCIECGACAWVCPSNIPLVQYF). The [4Fe-4S] cluster site is built by Cys-377, Cys-380, Cys-383, Cys-387, Cys-416, Cys-419, Cys-422, and Cys-426. The segment at 534–711 (QARAKQAAHP…EPVEPADPRK (178 aa)) is disordered.

Belongs to the 4Fe4S bacterial-type ferredoxin family. RnfC subfamily. As to quaternary structure, the complex is composed of six subunits: RsxA, RsxB, RsxC, RsxD, RsxE and RsxG. [4Fe-4S] cluster serves as cofactor.

It localises to the cell inner membrane. Part of a membrane-bound complex that couples electron transfer with translocation of ions across the membrane. Required to maintain the reduced state of SoxR. In Salmonella paratyphi A (strain ATCC 9150 / SARB42), this protein is Ion-translocating oxidoreductase complex subunit C.